The following is a 181-amino-acid chain: 6,7-dimethyl-8-ribityllumazine synthase (181 aa).

Residues phenylalanine 24, 62 to 64, and 86 to 88 each bind 5-amino-6-(D-ribitylamino)uracil; these read SFE and AII. Residue 91-92 coordinates (2S)-2-hydroxy-3-oxobutyl phosphate; the sequence is QT. The Proton donor role is filled by histidine 94. Phenylalanine 119 is a binding site for 5-amino-6-(D-ribitylamino)uracil. Arginine 133 is a binding site for (2S)-2-hydroxy-3-oxobutyl phosphate.

This sequence belongs to the DMRL synthase family.

It carries out the reaction (2S)-2-hydroxy-3-oxobutyl phosphate + 5-amino-6-(D-ribitylamino)uracil = 6,7-dimethyl-8-(1-D-ribityl)lumazine + phosphate + 2 H2O + H(+). It functions in the pathway cofactor biosynthesis; riboflavin biosynthesis; riboflavin from 2-hydroxy-3-oxobutyl phosphate and 5-amino-6-(D-ribitylamino)uracil: step 1/2. Catalyzes the formation of 6,7-dimethyl-8-ribityllumazine by condensation of 5-amino-6-(D-ribitylamino)uracil with 3,4-dihydroxy-2-butanone 4-phosphate. This is the penultimate step in the biosynthesis of riboflavin. The chain is 6,7-dimethyl-8-ribityllumazine synthase from Microcystis aeruginosa (strain NIES-843 / IAM M-2473).